We begin with the raw amino-acid sequence, 433 residues long: D-amino acid dehydrogenase (433 aa).

Residue 3–17 (IVVLGAGVLGVTSAW) participates in FAD binding.

The protein belongs to the DadA oxidoreductase family. The cofactor is FAD.

The enzyme catalyses a D-alpha-amino acid + A + H2O = a 2-oxocarboxylate + AH2 + NH4(+). The protein operates within amino-acid degradation; D-alanine degradation; NH(3) and pyruvate from D-alanine: step 1/1. Its function is as follows. Oxidative deamination of D-amino acids. The polypeptide is D-amino acid dehydrogenase (Paracoccus denitrificans (strain Pd 1222)).